The sequence spans 33 residues: Cytochrome b6-f complex subunit 6 (33 aa).

A helical transmembrane segment spans residues 4–24; sequence ITIISYFGFLLASIIFTLVLF.

It belongs to the PetL family. The 4 large subunits of the cytochrome b6-f complex are cytochrome b6, subunit IV (17 kDa polypeptide, PetD), cytochrome f and the Rieske protein, while the 4 small subunits are PetG, PetL, PetM and PetN. The complex functions as a dimer.

It is found in the plastid. It localises to the chloroplast thylakoid membrane. In terms of biological role, component of the cytochrome b6-f complex, which mediates electron transfer between photosystem II (PSII) and photosystem I (PSI), cyclic electron flow around PSI, and state transitions. PetL is important for photoautotrophic growth as well as for electron transfer efficiency and stability of the cytochrome b6-f complex. This Pinus thunbergii (Japanese black pine) protein is Cytochrome b6-f complex subunit 6.